A 357-amino-acid polypeptide reads, in one-letter code: Protein AAR2 homolog (357 aa).

Belongs to the AAR2 family.

In Caenorhabditis elegans, this protein is Protein AAR2 homolog.